A 189-amino-acid polypeptide reads, in one-letter code: Threonylcarbamoyl-AMP synthase (189 aa).

The 183-residue stretch at 7–189 folds into the YrdC-like domain; the sequence is NPRVNYAANM…LLTGQVVRPS (183 aa).

It belongs to the SUA5 family. TsaC subfamily.

Its subcellular location is the cytoplasm. It carries out the reaction L-threonine + hydrogencarbonate + ATP = L-threonylcarbamoyladenylate + diphosphate + H2O. Required for the formation of a threonylcarbamoyl group on adenosine at position 37 (t(6)A37) in tRNAs that read codons beginning with adenine. Catalyzes the conversion of L-threonine, HCO(3)(-)/CO(2) and ATP to give threonylcarbamoyl-AMP (TC-AMP) as the acyladenylate intermediate, with the release of diphosphate. The protein is Threonylcarbamoyl-AMP synthase of Cellvibrio japonicus (strain Ueda107) (Pseudomonas fluorescens subsp. cellulosa).